A 318-amino-acid chain; its full sequence is Ethyl acetate hydrolase (318 aa).

Catalysis depends on residues serine 165, aspartate 261, and histidine 291.

It belongs to the 'GDXG' lipolytic enzyme family. In terms of assembly, monomer.

It is found in the cytoplasm. It carries out the reaction ethyl acetate + H2O = ethanol + acetate + H(+). With respect to regulation, inhibited by the serine protease inhibitor phenylmethylsulfonyl fluoride, the histidine reagent diethylpyrocarbonate and two sulfhydryl reagents, mercuric chloride and naphthol AS-D chloroacetate. Not inhibited by EDTA. Functionally, esterase that catalyzes the hydrolysis of ethyl acetate. Can also use propyl acetate and the chromogenic substrates alpha-naphthyl acetate, alpha-naphthyl propionate, alpha-naphthyl caproate and 4-nitrophenyl acetate, with a preference for short-chain aliphatic esters. Highest activity is obtained in vitro with propyl acetate, followed by ethyl acetate. In vivo, could be involved in pyoverdine biosynthesis, but its specific role and its in vivo substrate have not been identified. The sequence is that of Ethyl acetate hydrolase from Pseudomonas putida (Arthrobacter siderocapsulatus).